Consider the following 375-residue polypeptide: Aminomethyltransferase (375 aa).

Belongs to the GcvT family. In terms of assembly, the glycine cleavage system is composed of four proteins: P, T, L and H.

The enzyme catalyses N(6)-[(R)-S(8)-aminomethyldihydrolipoyl]-L-lysyl-[protein] + (6S)-5,6,7,8-tetrahydrofolate = N(6)-[(R)-dihydrolipoyl]-L-lysyl-[protein] + (6R)-5,10-methylene-5,6,7,8-tetrahydrofolate + NH4(+). Its function is as follows. The glycine cleavage system catalyzes the degradation of glycine. In Cupriavidus pinatubonensis (strain JMP 134 / LMG 1197) (Cupriavidus necator (strain JMP 134)), this protein is Aminomethyltransferase.